We begin with the raw amino-acid sequence, 111 residues long: Cell cycle protein GpsB (111 aa).

Positions 38-72 (IKDYEAFHKEFEQLKQQNARLKRELEEQKLAATQV) form a coiled coil.

The protein belongs to the GpsB family. In terms of assembly, forms polymers through the coiled coil domains. Interacts with PBP1, MreC and EzrA.

It localises to the cytoplasm. Functionally, divisome component that associates with the complex late in its assembly, after the Z-ring is formed, and is dependent on DivIC and PBP2B for its recruitment to the divisome. Together with EzrA, is a key component of the system that regulates PBP1 localization during cell cycle progression. Its main role could be the removal of PBP1 from the cell pole after pole maturation is completed. Also contributes to the recruitment of PBP1 to the division complex. Not essential for septum formation. The polypeptide is Cell cycle protein GpsB (Bacillus cereus (strain ATCC 10987 / NRS 248)).